The chain runs to 373 residues: CXADR-like membrane protein (373 aa).

Positions 1–18 are cleaved as a signal peptide; the sequence is MSLLLLLLLVSYYVGTLG. Ig-like C2-type domains lie at 19–127 and 135–224; these read THTE…VILK and PKCE…VRVT. At 19–235 the chain is on the extracellular side; sequence THTEIKRVAE…QYVQSIGMVA (217 aa). Disulfide bonds link C35-C111 and C153-C208. Residues N74 and N197 are each glycosylated (N-linked (GlcNAc...) asparagine). A helical transmembrane segment spans residues 236 to 256; that stretch reads GAVTGIVAGALLIFLLVWLLI. Residues 257–373 are Cytoplasmic-facing; that stretch reads RRKDKERYEE…PSQSRAFQTV (117 aa). Residues 264–281 show a composition bias toward basic and acidic residues; it reads YEEEERPNEIREDAEAPK. The segment at 264 to 373 is disordered; the sequence is YEEEERPNEI…PSQSRAFQTV (110 aa). A compositionally biased stretch (low complexity) spans 288 to 314; that stretch reads SSSSSGSRSSRSGSSSTRSTANSASRS. The span at 355–373 shows a compositional bias: polar residues; it reads KAETTPSMIPSQSRAFQTV.

In terms of tissue distribution, predominantly expressed in epithelial cells within different tissues and in the white adipose tissue. Expressed at high levels in small intestine and placenta, at intermediate levels in the heart, skeletal muscle, colon, spleen, kidney and lung and at low levels in the liver and peripheral blood leukocytes. Highly abundant in the intestine during embryo and fetal development (at protein level).

The protein resides in the cell junction. It localises to the tight junction. The protein localises to the cell membrane. In terms of biological role, may be involved in the cell-cell adhesion. May play a role in adipocyte differentiation and development of obesity. Is required for normal small intestine development. The polypeptide is CXADR-like membrane protein (CLMP) (Homo sapiens (Human)).